The following is an 81-amino-acid chain: Elsinochrome C biosynthesis cluster protein SNOG_08613 (81 aa).

Part of the gene cluster that mediates the biosynthesis of elsinochrome C, a perelyenequinone phytotoxin structurally similar to cercosporin. The first step of elsinochrome C biosynthesis is performed by the polyketide synthase elcA which catalyzes the formation of nor-toralactone. The starter unit acyltransferase (SAT) domain of elcA initiates polyketide extension by the selective utilization of acetyl-CoA, which is elongated to the heptaketide in the beta-ketoacyl synthase (KS) domain by successive condensations with six malonyl units introduced by the malonyl acyltransferase (MAT) domain. The product template (PT) domain catalyzes C4-C9 and C2-C11 aldol cyclizations and dehydrations to a trihydroxynaphthalene, which is thought to be delivered to the thioesterase (TE) domain for product release. The bifunctional enzyme elcB then methylates nor-toralactone to toralactone before conducting an unusual oxidative aromatic ring opening. The next step in perylenequinone biosynthesis is an O-methylation at the nascent OH-6 of the elcB product performed by the O-methyltransferase elcD. The oxidative coupling of the two monomeric naphthol units in perylenequinone biosynthesis is catalyzed by the FAD-dependent monooxygenase elcE and the multicopper oxidase elcG. ElcG might catalyze the first intermolecular coupling in a regio- and stereo-selective manner via a phenol radical coupling mechanism and the elcE could forge the second C-C bond intramolecularly via a hydride transfer mechanism. The fasciclin domain-containing protein elcF might also play a role duting this step. The last piece of the puzzle in the biosynthesis of elsinochrome C is the additional annulation by enolate coupling to afford the dihydrobenzo(ghi)perylenequinone system, catalyzed by the FAD-dependent monooxygenase elcH. The sequence is that of Elsinochrome C biosynthesis cluster protein SNOG_08613 from Phaeosphaeria nodorum (strain SN15 / ATCC MYA-4574 / FGSC 10173) (Glume blotch fungus).